Here is a 239-residue protein sequence, read N- to C-terminus: UPF0173 metal-dependent hydrolase Msm_0779 (239 aa).

It belongs to the UPF0173 family.

The chain is UPF0173 metal-dependent hydrolase Msm_0779 from Methanobrevibacter smithii (strain ATCC 35061 / DSM 861 / OCM 144 / PS).